A 102-amino-acid chain; its full sequence is Co-chaperonin GroES (102 aa).

The protein belongs to the GroES chaperonin family. As to quaternary structure, heptamer of 7 subunits arranged in a ring. Interacts with the chaperonin GroEL.

The protein resides in the cytoplasm. Its function is as follows. Together with the chaperonin GroEL, plays an essential role in assisting protein folding. The GroEL-GroES system forms a nano-cage that allows encapsulation of the non-native substrate proteins and provides a physical environment optimized to promote and accelerate protein folding. GroES binds to the apical surface of the GroEL ring, thereby capping the opening of the GroEL channel. In Chlamydia felis (strain Fe/C-56) (Chlamydophila felis), this protein is Co-chaperonin GroES.